Consider the following 344-residue polypeptide: Lipase chaperone (344 aa).

Residues 14 to 34 traverse the membrane as a helical segment; that stretch reads AVVYGVVGLAAIAGVAMWSGA. The tract at residues 39–78 is disordered; that stretch reads ATGASGESPEASVAGGSVTAPPQAAVPASTGLPPSLAGSS.

The protein belongs to the lipase chaperone family.

The protein resides in the cell inner membrane. In terms of biological role, may be involved in the folding of the extracellular lipase during its passage through the periplasm. The sequence is that of Lipase chaperone (lifO) from Pseudomonas sp. (strain KWI-56).